The sequence spans 651 residues: Coiled-coil domain-containing protein 81 (651 aa).

Positions 194-314 are disordered; that stretch reads LSSRESFGKR…PKTSPAPACQ (121 aa). Ser-206 is modified (phosphoserine). Composition is skewed to basic and acidic residues over residues 212–222 and 232–250; these read RIEHKETENKP and GENR…KEEG. Positions 265 to 275 are enriched in polar residues; the sequence is SISPAKVTSGS. Residues Ser-273, Ser-275, Ser-294, and Ser-416 each carry the phosphoserine modification. 2 coiled-coil regions span residues 428–465 and 539–566; these read SQSL…EELA and KRNT…EHLA.

It is found in the cytoplasm. It localises to the cytoskeleton. Its subcellular location is the microtubule organizing center. The protein resides in the centrosome. The sequence is that of Coiled-coil domain-containing protein 81 (Ccdc81) from Rattus norvegicus (Rat).